Here is a 566-residue protein sequence, read N- to C-terminus: Chondroitin sulfate proteoglycan 5 (566 aa).

An N-terminal signal peptide occupies residues 1 to 30 (MGRAGGGGPGRGPPPLLLFLGAALVLASGA). The Extracellular portion of the chain corresponds to 31–423 (VPAREAGSAV…SIITDFQVMC (393 aa)). The O-linked (Xyl...) (chondroitin sulfate) serine glycan is linked to Ser-38. The disordered stretch occupies residues 39-82 (AVEAEELVKGSPAWEPPANDTREEAGPPAAGEDEASWTAPGGEL). Asn-57 carries an N-linked (GlcNAc...) asparagine glycan. O-linked (Xyl...) (chondroitin sulfate) serine glycosylation is present at Ser-117. 3 disordered regions span residues 143 to 202 (IPEA…LEPQ), 215 to 248 (GLDG…TPSW), and 262 to 354 (ESDF…ASSE). The O-linked (GalNAc...) serine glycan is linked to Ser-165. An interaction with TNC and TNR region spans residues 264-301 (DFYPTTSFYDDLDEEEEEEEDDKDAVGGGDLEDENELL). Residues 273–286 (DDLDEEEEEEEDDK) show a composition bias toward acidic residues. The EGF-like domain maps to 371–413 (RSVCDLFPSYCHNGGQCYLVENIGAFCRCNTQDYIWHKGMRCE). Cystine bridges form between Cys-374–Cys-387, Cys-381–Cys-397, and Cys-399–Cys-412. The chain crosses the membrane as a helical span at residues 424 to 444 (VAVGSAALVLLLLFMMTVFFA). Positions 442 to 460 (FFAKKLYLLKTENTKLRRT) are interaction with GOPC. The Cytoplasmic portion of the chain corresponds to 445 to 566 (KKLYLLKTEN…DVNCLQNNLT (122 aa)). Residues Ser-467, Ser-475, Ser-483, and Ser-543 each carry the phosphoserine modification.

As to quaternary structure, binds TNR and probably TNC. Interacts with ERBB3 and GOPC. Interacts with MDK; this interaction is independent of the presence of chondroitin sulfate chains and promotes elongation of oligodendroglial precursor-like cells. Post-translationally, N-glycosylated. O-glycosylated; contains chondroitin sulfate glycans. Part-time proteoglycan, expressed in part as a proteoglycan exhibiting chondroitin sulfate glycans and in part as a non-proteoglycan form. The relative amount of both forms depends on tissues and tissue maturation. In terms of processing, phosphorylated; in intracellular and extracellular parts. As to expression, detected in cerebrospinal fluid (at protein level). Detected in urine (at protein level). Expressed in brain (at protein level).

The protein localises to the cell membrane. Its subcellular location is the synaptic cell membrane. The protein resides in the endoplasmic reticulum membrane. It is found in the golgi apparatus membrane. It localises to the cell surface. The protein localises to the secreted. Its function is as follows. May function as a growth and differentiation factor involved in neuritogenesis. May induce ERBB3 activation. This is Chondroitin sulfate proteoglycan 5 (CSPG5) from Homo sapiens (Human).